A 282-amino-acid chain; its full sequence is Transcription factor HES-1 (282 aa).

The disordered stretch occupies residues 1 to 44 (MPADIMEKNSSSPVAATPASVNTTPDKPKTASEHRKSSKPIMEK). Positions 10–21 (SSSPVAATPASV) are enriched in low complexity. Residues 26–35 (DKPKTASEHR) are compositionally biased toward basic and acidic residues. Residues 34–91 (HRKSSKPIMEKRRRARINESLSQLKTLILDALKKDSSRHSKLEKADILEMTVKHLRNL) form the bHLH domain. Residues 110-143 (YRAGFSECMNEVTRFLSTCEGVNTEVRTRLLGHL) form the Orange domain. Disordered regions lie at residues 158-204 (QAHP…GSAP) and 256-282 (TSVG…PWRN). 2 stretches are compositionally biased toward pro residues: residues 164–174 (QAPPPPPPSGP) and 182–202 (FAPP…PPGS). Residues 264-275 (SPSSGSSLTSDS) are compositionally biased toward low complexity. Positions 277-280 (WRPW) match the WRPW motif motif.

In terms of assembly, interacts with SIRT1. Transcription repression requires formation of a complex with a corepressor protein of the Groucho/TLE family. Interacts (via WPRW motif) with TLE1, and more weakly with TLE2. Interacts with HES6. Interacts with an FA complex, composed of FANCA, FANCF, FANCG and FANCL, but not of FANCC, nor FANCE. Expressed at high levels in undifferentiated neural precursor cells, but the level of expression decreases as neural differentiation proceeds.

The protein resides in the nucleus. Transcriptional repressor of genes that require a bHLH protein for their transcription. May act as a negative regulator of myogenesis by inhibiting the functions of MYOD1 and ASH1. Binds DNA on N-box motifs: 5'-CACNAG-3' with high affinity and on E-box motifs: 5'-CANNTG-3' with low affinity. May play a role in a functional FA core complex response to DNA cross-link damage, being required for the stability and nuclear localization of FA core complex proteins, as well as for FANCD2 monoubiquitination in response to DNA damage. The polypeptide is Transcription factor HES-1 (Hes1) (Mus musculus (Mouse)).